The chain runs to 297 residues: Phosphatidylglycerol--prolipoprotein diacylglyceryl transferase (297 aa).

The next 3 membrane-spanning stretches (helical) occupy residues 17–37, 59–79, and 97–117; these read LAVR…IVVG, MLFY…VLFY, and GGMS…LFAW. Arg142 is a binding site for a 1,2-diacyl-sn-glycero-3-phospho-(1'-sn-glycerol). 2 consecutive transmembrane segments (helical) span residues 230 to 250 and 257 to 277; these read MGAV…TVEF and FLGL…PMIV.

It belongs to the Lgt family.

The protein resides in the cell inner membrane. The catalysed reaction is L-cysteinyl-[prolipoprotein] + a 1,2-diacyl-sn-glycero-3-phospho-(1'-sn-glycerol) = an S-1,2-diacyl-sn-glyceryl-L-cysteinyl-[prolipoprotein] + sn-glycerol 1-phosphate + H(+). The protein operates within protein modification; lipoprotein biosynthesis (diacylglyceryl transfer). In terms of biological role, catalyzes the transfer of the diacylglyceryl group from phosphatidylglycerol to the sulfhydryl group of the N-terminal cysteine of a prolipoprotein, the first step in the formation of mature lipoproteins. The protein is Phosphatidylglycerol--prolipoprotein diacylglyceryl transferase of Burkholderia multivorans (strain ATCC 17616 / 249).